A 164-amino-acid polypeptide reads, in one-letter code: CDP-archaeol synthase (164 aa).

A run of 4 helical transmembrane segments spans residues 3 to 23 (LTVF…AVFA), 55 to 75 (AIGI…YHVI), 77 to 97 (VFDA…GAFI), and 122 to 142 (FLVY…AVVI).

The protein belongs to the CDP-archaeol synthase family. The cofactor is Mg(2+).

It is found in the cell membrane. It carries out the reaction 2,3-bis-O-(geranylgeranyl)-sn-glycerol 1-phosphate + CTP + H(+) = CDP-2,3-bis-O-(geranylgeranyl)-sn-glycerol + diphosphate. It participates in membrane lipid metabolism; glycerophospholipid metabolism. Its function is as follows. Catalyzes the formation of CDP-2,3-bis-(O-geranylgeranyl)-sn-glycerol (CDP-archaeol) from 2,3-bis-(O-geranylgeranyl)-sn-glycerol 1-phosphate (DGGGP) and CTP. This reaction is the third ether-bond-formation step in the biosynthesis of archaeal membrane lipids. The sequence is that of CDP-archaeol synthase from Pyrobaculum aerophilum (strain ATCC 51768 / DSM 7523 / JCM 9630 / CIP 104966 / NBRC 100827 / IM2).